The chain runs to 272 residues: Insulin-like growth factor-binding protein 1 (272 aa).

Residues M1–G25 form the signal peptide. In terms of domain architecture, IGFBP N-terminal spans Q28 to E109. 6 cysteine pairs are disulfide-bonded: C32–C59, C35–C61, C43–C62, C50–C65, C73–C86, and C80–C106. Phosphoserine occurs at positions 139, 157, and 169. Residue T170 is modified to Phosphothreonine. Position 171 is a phosphotyrosine (Y171). Residues K186–C264 form the Thyroglobulin type-1 domain. Cystine bridges form between C189–C219, C230–C241, and C243–C264. The residue at position 255 (S255) is a Phosphoserine. Residues R259–D261 carry the Cell attachment site motif.

In terms of assembly, binds equally well IGF1 and IGF2. Interacts with integrin ITGA5:ITGB1. Interacts with VHL; this interaction inhibits HIF1A degradation.

The protein resides in the secreted. Its function is as follows. Multifunctional protein that plays a critical role in regulating the availability of IGFs such as IGF1 and IGF2 to their receptors and thereby regulates IGF-mediated cellular processes including cell migration, proliferation, differentiation or apoptosis in a cell-type specific manner. Also plays a positive role in cell migration by interacting with integrin ITGA5:ITGB1 through its RGD motif. Mechanistically, binding to integrins leads to activation of focal adhesion kinase/PTK2 and stimulation of the mitogen-activated protein kinase (MAPK) pathway. Regulates cardiomyocyte apoptosis by suppressing HIF-1alpha/HIF1A ubiquitination and subsequent degradation. In Mus musculus (Mouse), this protein is Insulin-like growth factor-binding protein 1 (Igfbp1).